The sequence spans 1354 residues: RNA-directed RNA polymerase VP1 (1354 aa).

The catalysed reaction is RNA(n) + a ribonucleoside 5'-triphosphate = RNA(n+1) + diphosphate. Functionally, RNA-directed RNA polymerase that is involved in transcription and genome replication. Following infection, it catalyzes the synthesis of fully conservative plus strands. After core assembly, which consists in recruitment of one capped plus-strand for each genomic segments and polymerase complexes, the polymerase switches mode and catalyzes the synthesis of complementary minus-strands. The chain is RNA-directed RNA polymerase VP1 from Cryphonectria parasitica mycoreovirus 1 (strain 9B21) (CpMYRV-1).